The primary structure comprises 85 residues: Toxin BmKT (85 aa).

The first 19 residues, 1–19, serve as a signal peptide directing secretion; sequence MNYLVFFSLALLLMTGVES. The LCN-type CS-alpha/beta domain occupies 21-83; it reads RDGYIADDKN…VPIRVPGKCN (63 aa). Intrachain disulfides connect cysteine 31/cysteine 82, cysteine 35/cysteine 55, cysteine 41/cysteine 65, and cysteine 45/cysteine 67.

The protein belongs to the long (4 C-C) scorpion toxin superfamily. Sodium channel inhibitor family. Alpha subfamily. In terms of tissue distribution, expressed by the venom gland.

Its subcellular location is the secreted. In terms of biological role, binds to sodium channels (Nav) and inhibits the inactivation of the activated channels, thereby blocking neuronal transmission. Tested on mice, has antitumor effect and strong inhibitory effect on pain. The sequence is that of Toxin BmKT from Olivierus martensii (Manchurian scorpion).